A 225-amino-acid polypeptide reads, in one-letter code: Transmembrane protein C16orf54 homolog (225 aa).

The chain crosses the membrane as a helical span at residues 34 to 54 (IPIMLGLASLTAFFIITTAVL). The disordered stretch occupies residues 107 to 149 (RAPDPPTPGGTLEGRATAPPAIPTPHPSPSSLVPQTPPEVPAQ). Phosphothreonine is present on residues Thr-113 and Thr-117. The residue at position 195 (Ser-195) is a Phosphoserine.

It is found in the membrane. This is Transmembrane protein C16orf54 homolog from Rattus norvegicus (Rat).